We begin with the raw amino-acid sequence, 479 residues long: Phosphatidylinositol 4-kinase type 2-alpha (479 aa).

Methionine 1 bears the N-acetylmethionine mark. The interval 1 to 58 (MDETSPLVSPERAQPPEYTFPSGSGAHFPQVPGGAVRVAAAAGSGPSPPCSPGHDRER) is disordered. Serine 5, serine 9, serine 44, serine 47, and serine 51 each carry phosphoserine. The segment covering 31–45 (VPGGAVRVAAAAGSG) has biased composition (low complexity). Residues 124-453 (SIYPERIYQG…VQMPPVIVET (330 aa)) enclose the PI3K/PI4K catalytic domain. The segment at 130 to 136 (IYQGSSG) is G-loop. Residues 131–137 (YQGSSGS) and lysine 152 each bind ATP. Residues 157 to 159 (EPY) form an important for substrate binding region. The segment at 165–178 (KWTKWLQKLCCPCC) is important for interaction with membranes. 4 S-palmitoyl cysteine lipidation sites follow: cysteine 174, cysteine 175, cysteine 177, and cysteine 178. An ATP-binding site is contributed by 261–264 (QLFV). The important for interaction with membranes stretch occupies residues 268-276 (KDADYWLRR). The catalytic loop stretch occupies residues 305–313 (RNTDRGNDN). The activation loop stretch occupies residues 344-364 (AIDNGLAFPLKHPDSWRAYPF). Aspartate 346 serves as a coordination point for ATP. Positions 359 to 368 (WRAYPFYWAW) are important for interaction with membranes. At serine 462 the chain carries Phosphoserine.

Belongs to the PI3/PI4-kinase family. Type II PI4K subfamily. As to quaternary structure, associates with the BLOC-1 and the AP-3 complexes; the BLOC-1 complex is required for optimal binding of PI4K2A to the AP-3 complex. Interacts with BLOC1S5 and DTNBP1. Interacts with ITCH. Interacts with FOS; this interaction may enhance phosphatidylinositol phosphorylation activity. Interacts with ATG9A. Post-translationally, palmitoylated by ZDHHC3 and ZDHHC7 in the CCPCC motif. Palmitoylation is cholesterol-dependent, and required for TGN localization. In terms of processing, ubiquitinated by ITCH; this does not lead to proteasomal degradation. In terms of tissue distribution, detected in brain (at protein level).

The protein resides in the golgi apparatus. It is found in the trans-Golgi network membrane. Its subcellular location is the membrane raft. The protein localises to the endosome. It localises to the endosome membrane. The protein resides in the cytoplasmic vesicle. It is found in the cell projection. Its subcellular location is the dendrite. The protein localises to the presynaptic cell membrane. It localises to the synapse. The protein resides in the synaptosome. It is found in the mitochondrion. Its subcellular location is the membrane. The protein localises to the cell membrane. It localises to the perikaryon. The protein resides in the neuron projection. It catalyses the reaction a 1,2-diacyl-sn-glycero-3-phospho-(1D-myo-inositol) + ATP = a 1,2-diacyl-sn-glycero-3-phospho-(1D-myo-inositol 4-phosphate) + ADP + H(+). Functionally, membrane-bound phosphatidylinositol-4 kinase (PI4-kinase) that catalyzes the phosphorylation of phosphatidylinositol (PI) to phosphatidylinositol 4-phosphate (PI4P), a lipid that plays important roles in endocytosis, Golgi function, protein sorting and membrane trafficking and is required for prolonged survival of neurons. Besides, phosphorylation of phosphatidylinositol (PI) to phosphatidylinositol 4-phosphate (PI4P) is the first committed step in the generation of phosphatidylinositol 4,5-bisphosphate (PIP2), a precursor of the second messenger inositol 1,4,5-trisphosphate (InsP3). The protein is Phosphatidylinositol 4-kinase type 2-alpha (Pi4k2a) of Mus musculus (Mouse).